A 454-amino-acid polypeptide reads, in one-letter code: Allantoinase (454 aa).

Positions 60, 62, 147, 183, 239, and 312 each coordinate Zn(2+). Position 147 is an N6-carboxylysine (lysine 147).

This sequence belongs to the metallo-dependent hydrolases superfamily. Allantoinase family. As to quaternary structure, homotetramer. Zn(2+) is required as a cofactor. Post-translationally, carboxylation allows a single lysine to coordinate two zinc ions.

It carries out the reaction (S)-allantoin + H2O = allantoate + H(+). It functions in the pathway nitrogen metabolism; (S)-allantoin degradation; allantoate from (S)-allantoin: step 1/1. In terms of biological role, catalyzes the conversion of allantoin (5-ureidohydantoin) to allantoic acid by hydrolytic cleavage of the five-member hydantoin ring. This chain is Allantoinase, found in Bacillus velezensis (strain DSM 23117 / BGSC 10A6 / LMG 26770 / FZB42) (Bacillus amyloliquefaciens subsp. plantarum).